The chain runs to 208 residues: 3-demethoxyubiquinol 3-hydroxylase (208 aa).

Glu57, Glu87, His90, Glu139, Glu171, and His174 together coordinate Fe cation.

The protein belongs to the COQ7 family. The cofactor is Fe cation.

It is found in the cell membrane. The catalysed reaction is a 5-methoxy-2-methyl-3-(all-trans-polyprenyl)benzene-1,4-diol + AH2 + O2 = a 3-demethylubiquinol + A + H2O. It participates in cofactor biosynthesis; ubiquinone biosynthesis. In terms of biological role, catalyzes the hydroxylation of 2-nonaprenyl-3-methyl-6-methoxy-1,4-benzoquinol during ubiquinone biosynthesis. This chain is 3-demethoxyubiquinol 3-hydroxylase, found in Burkholderia pseudomallei (strain 1106a).